The primary structure comprises 476 residues: MNILFAVSECVPFVKSGGLADVAGALPKELKKLGVEVRIILPNYSLIPQKLRDGCTLHKVINVPLGWRNQYCGILKGEQDGITYYLIDNEYYFKRDSLYGHYDDGERFSYFSKAVLECIPHLDFEVDVLHSHDWHTAMVNFLLREKYQDNPLYEHIKTVYTIHNLQFQGVFPPEVMYDLLELGDEYFHSEQLEFYGNVNFMKGGIIASDQITAVSPTYKEEIQYEFFGEKLDGLLRKYNDKLSGIVNGIDTSVYNPETDSYITAQYDADSLYEKNENKRALQRYFGLPEKEDTPIISMVTRLTKQKGLDLVRTVFREIMEEDVQCIILGSGDSEYEQFFEWMAYEYPEKVKVYIGFNEELAHQVYAGSDLFLMPSLFEPCGLGQLIALAYGTIPIVRETGGLNDTVQSYDEETGEGNGFSFTNFNAHDMLHTVLRAIEFYHDKSVWEQLVKQAMTEDYSWEKSALAYKKLYKSLME.

Residue lysine 15 coordinates ADP-alpha-D-glucose.

This sequence belongs to the glycosyltransferase 1 family. Bacterial/plant glycogen synthase subfamily.

The catalysed reaction is [(1-&gt;4)-alpha-D-glucosyl](n) + ADP-alpha-D-glucose = [(1-&gt;4)-alpha-D-glucosyl](n+1) + ADP + H(+). It participates in glycan biosynthesis; glycogen biosynthesis. Functionally, synthesizes alpha-1,4-glucan chains using ADP-glucose. This chain is Glycogen synthase, found in Bacillus anthracis.